The primary structure comprises 105 residues: Large ribosomal subunit protein eL36 (105 aa).

Lys62 carries the N6-acetyllysine modification.

The protein belongs to the eukaryotic ribosomal protein eL36 family. Component of the large ribosomal subunit.

It is found in the cytoplasm. The protein localises to the cytosol. In terms of biological role, component of the large ribosomal subunit. The ribosome is a large ribonucleoprotein complex responsible for the synthesis of proteins in the cell. The sequence is that of Large ribosomal subunit protein eL36 (RPL36) from Homo sapiens (Human).